A 213-amino-acid polypeptide reads, in one-letter code: Uridine kinase (213 aa).

15-22 is an ATP binding site; the sequence is GASASGKS.

Belongs to the uridine kinase family.

It is found in the cytoplasm. It carries out the reaction uridine + ATP = UMP + ADP + H(+). The enzyme catalyses cytidine + ATP = CMP + ADP + H(+). Its pathway is pyrimidine metabolism; CTP biosynthesis via salvage pathway; CTP from cytidine: step 1/3. It functions in the pathway pyrimidine metabolism; UMP biosynthesis via salvage pathway; UMP from uridine: step 1/1. This Enterobacter sp. (strain 638) protein is Uridine kinase.